A 287-amino-acid polypeptide reads, in one-letter code: ATP synthase gamma chain (287 aa).

It belongs to the ATPase gamma chain family. As to quaternary structure, F-type ATPases have 2 components, CF(1) - the catalytic core - and CF(0) - the membrane proton channel. CF(1) has five subunits: alpha(3), beta(3), gamma(1), delta(1), epsilon(1). CF(0) has three main subunits: a, b and c.

Its subcellular location is the cell inner membrane. Its function is as follows. Produces ATP from ADP in the presence of a proton gradient across the membrane. The gamma chain is believed to be important in regulating ATPase activity and the flow of protons through the CF(0) complex. The chain is ATP synthase gamma chain from Escherichia coli (strain 55989 / EAEC).